We begin with the raw amino-acid sequence, 318 residues long: Methionyl-tRNA formyltransferase (318 aa).

Position 114-117 (114-117 (SVLP)) interacts with (6S)-5,6,7,8-tetrahydrofolate.

The protein belongs to the Fmt family.

It catalyses the reaction L-methionyl-tRNA(fMet) + (6R)-10-formyltetrahydrofolate = N-formyl-L-methionyl-tRNA(fMet) + (6S)-5,6,7,8-tetrahydrofolate + H(+). Attaches a formyl group to the free amino group of methionyl-tRNA(fMet). The formyl group appears to play a dual role in the initiator identity of N-formylmethionyl-tRNA by promoting its recognition by IF2 and preventing the misappropriation of this tRNA by the elongation apparatus. In Bdellovibrio bacteriovorus (strain ATCC 15356 / DSM 50701 / NCIMB 9529 / HD100), this protein is Methionyl-tRNA formyltransferase.